A 231-amino-acid polypeptide reads, in one-letter code: Adenosylcobinamide-GDP ribazoletransferase (231 aa).

6 helical membrane-spanning segments follow: residues 29 to 49 (ICAYFTFVGYLAGVFYFSMKL), 53 to 73 (NFLWTLLSVALGFYLFDLFHF), 101 to 121 (IGPFAFFYAALYIVAYLYAFL), 126 to 146 (IDLIYVAVLGRFSMNILLHFG), 167 to 187 (LISLVFTIPLVYFPLNYIISL), and 211 to 231 (DVLGATCMFSQLSIMVALSLI).

The protein belongs to the CobS family. Requires Mg(2+) as cofactor.

The protein resides in the cell inner membrane. It carries out the reaction alpha-ribazole + adenosylcob(III)inamide-GDP = adenosylcob(III)alamin + GMP + H(+). It catalyses the reaction alpha-ribazole 5'-phosphate + adenosylcob(III)inamide-GDP = adenosylcob(III)alamin 5'-phosphate + GMP + H(+). It participates in cofactor biosynthesis; adenosylcobalamin biosynthesis; adenosylcobalamin from cob(II)yrinate a,c-diamide: step 7/7. Functionally, joins adenosylcobinamide-GDP and alpha-ribazole to generate adenosylcobalamin (Ado-cobalamin). Also synthesizes adenosylcobalamin 5'-phosphate from adenosylcobinamide-GDP and alpha-ribazole 5'-phosphate. In Kosmotoga olearia (strain ATCC BAA-1733 / DSM 21960 / TBF 19.5.1), this protein is Adenosylcobinamide-GDP ribazoletransferase.